Reading from the N-terminus, the 223-residue chain is Killer cell lectin-like receptor subfamily B member 1B allele B (223 aa).

Topologically, residues 1–43 (MDSTTLVYADLNLARIQEPKHDSPPSLSPDTCRCPRWHRLALK) are cytoplasmic. Residues 6 to 11 (LVYADL) carry the ITIM motif motif. The LCK-binding motif signature appears at 32–35 (CRCP). The helical; Signal-anchor for type II membrane protein transmembrane segment at 44–64 (FGCAGLILLVLVVIGLCVLVL) threads the bilayer. The Extracellular portion of the chain corresponds to 65 to 223 (SVQKSSVQKI…LNHETPCNDS (159 aa)). One can recognise a C-type lectin domain in the interval 101–211 (HRDKCFHVSQ…CSSDNRWICQ (111 aa)). Disulfide bonds link C122/C210 and C189/C202.

In terms of assembly, homodimer; disulfide-linked. Interacts with tyrosine kinase LCK. Binds PTPN6/SHP-1 in a phosphorylation-dependent manner. As to expression, expressed in NK cells and a subset of T-cells.

It is found in the membrane. Functionally, receptor for CLEC2D/OCIL. Ligand-binding contributes to inhibition of cytotoxic natural killer (NK) cells. May mediate MHC class I-independent 'missing-self' recognition of allografts, tumor cells and virus-infected cells. This is Killer cell lectin-like receptor subfamily B member 1B allele B (Klrb1b) from Mus musculus (Mouse).